Here is a 1450-residue protein sequence, read N- to C-terminus: DNA-directed RNA polymerase RPB1 homolog (1450 aa).

This sequence belongs to the RNA polymerase beta' chain family. In terms of assembly, part of the viral DNA-directed RNA polymerase that consists of 8 polII-like subunits (RPB1, RPB2, RPB3, RPB5, RPB6, RPB7, RPB9, RPB10), a capping enzyme and a termination factor.

The protein resides in the virion. The catalysed reaction is RNA(n) + a ribonucleoside 5'-triphosphate = RNA(n+1) + diphosphate. Functionally, catalytic component of the DNA-directed RNA polymerase (RNAP) that catalyzes the transcription in the cytoplasm of viral DNA into RNA using the four ribonucleoside triphosphates as substrates. Forms the polymerase active center together with RPB2. Part of the core element with the central large cleft, the clamp element that moves to open and close the cleft and the jaws that are thought to grab the incoming DNA template. The sequence is that of DNA-directed RNA polymerase RPB1 homolog from Ornithodoros (relapsing fever ticks).